We begin with the raw amino-acid sequence, 96 residues long: Large ribosomal subunit protein uL18m (96 aa).

It belongs to the universal ribosomal protein uL18 family.

The protein localises to the mitochondrion. This chain is Large ribosomal subunit protein uL18m (RPL18), found in Reclinomonas americana.